Here is a 127-residue protein sequence, read N- to C-terminus: Fluoride-specific ion channel FluC (127 aa).

Helical transmembrane passes span proline 4–leucine 24, glycine 36–alanine 56, leucine 68–valine 88, and tryptophan 98–isoleucine 118. Positions 75 and 78 each coordinate Na(+).

The protein belongs to the fluoride channel Fluc/FEX (TC 1.A.43) family.

The protein localises to the cell inner membrane. It carries out the reaction fluoride(in) = fluoride(out). Na(+) is not transported, but it plays an essential structural role and its presence is essential for fluoride channel function. Fluoride-specific ion channel. Important for reducing fluoride concentration in the cell, thus reducing its toxicity. In Nitrosomonas europaea (strain ATCC 19718 / CIP 103999 / KCTC 2705 / NBRC 14298), this protein is Fluoride-specific ion channel FluC.